The primary structure comprises 493 residues: Cardiolipin synthase 1 (493 aa).

Transmembrane regions (helical) follow at residues 13–33 and 45–65; these read FTII…IIIF and WAWL…YLFF. PLD phosphodiesterase domains lie at 228-255 and 406-433; these read MNNR…GDEY and ENGF…DFRS. Catalysis depends on residues H233, K235, D240, H411, K413, and D418.

The protein belongs to the phospholipase D family. Cardiolipin synthase subfamily.

The protein localises to the cell membrane. The enzyme catalyses 2 a 1,2-diacyl-sn-glycero-3-phospho-(1'-sn-glycerol) = a cardiolipin + glycerol. Catalyzes the reversible phosphatidyl group transfer from one phosphatidylglycerol molecule to another to form cardiolipin (CL) (diphosphatidylglycerol) and glycerol. The sequence is that of Cardiolipin synthase 1 (cls1) from Staphylococcus aureus (strain MRSA252).